The following is a 198-amino-acid chain: Recombination protein RecR (198 aa).

The C4-type zinc-finger motif lies at 57–72 (CSVCGRLTDDDPCSIC). Residues 80–175 (TTILVLEDSR…KVTRLARGLA (96 aa)) form the Toprim domain.

The protein belongs to the RecR family.

In terms of biological role, may play a role in DNA repair. It seems to be involved in an RecBC-independent recombinational process of DNA repair. It may act with RecF and RecO. This Streptococcus pneumoniae (strain Hungary19A-6) protein is Recombination protein RecR.